Here is a 290-residue protein sequence, read N- to C-terminus: ATP synthase gamma chain (290 aa).

This sequence belongs to the ATPase gamma chain family. In terms of assembly, F-type ATPases have 2 components, CF(1) - the catalytic core - and CF(0) - the membrane proton channel. CF(1) has five subunits: alpha(3), beta(3), gamma(1), delta(1), epsilon(1). CF(0) has three main subunits: a, b and c.

It localises to the cell inner membrane. Functionally, produces ATP from ADP in the presence of a proton gradient across the membrane. The gamma chain is believed to be important in regulating ATPase activity and the flow of protons through the CF(0) complex. This chain is ATP synthase gamma chain, found in Bradyrhizobium diazoefficiens (strain JCM 10833 / BCRC 13528 / IAM 13628 / NBRC 14792 / USDA 110).